Reading from the N-terminus, the 782-residue chain is Beta-mannosyltransferase 9 (782 aa).

The Cytoplasmic segment spans residues 1 to 26; that stretch reads MEKLIQSTISLFISLSLKISTKSYKS. The chain crosses the membrane as a helical span at residues 27–47; it reads IISILFIISLLSIILTTTITV. The Extracellular portion of the chain corresponds to 48–782; that stretch reads YHDPERIITT…GKDKGKDKSN (735 aa). The disordered stretch occupies residues 66-96; that stretch reads KSVFTASSPKQQDKLQQEIDQHQSDNSHEQQ. A compositionally biased stretch (basic and acidic residues) spans 76-96; the sequence is QQDKLQQEIDQHQSDNSHEQQ. N-linked (GlcNAc...) asparagine glycans are attached at residues asparagine 445, asparagine 648, and asparagine 699.

This sequence belongs to the BMT family.

It is found in the membrane. Beta-mannosyltransferase involved in cell wall biosynthesis through beta-1,2-mannosylation of cell wall phosphopeptidomannan. This chain is Beta-mannosyltransferase 9 (BMT9), found in Candida albicans (strain SC5314 / ATCC MYA-2876) (Yeast).